Reading from the N-terminus, the 309-residue chain is Extracellular agarase (309 aa).

A signal peptide (tat-type signal) is located at residues 1–30 (MVNRRDLIKWSAVALGAGAGLAGPAPAAHA). The region spanning 33–309 (LEWEQYPVPA…YRWVRTYQAV (277 aa)) is the GH16 domain. Catalysis depends on E155, which acts as the Nucleophile. Residue E160 is the Proton donor of the active site.

It belongs to the glycosyl hydrolase 16 family. In terms of processing, predicted to be exported by the Tat system. The position of the signal peptide cleavage has been experimentally proven.

It localises to the secreted. The enzyme catalyses Hydrolysis of (1-&gt;4)-beta-D-galactosidic linkages in agarose, giving the tetramer as the predominant product.. The chain is Extracellular agarase (dagA) from Streptomyces coelicolor (strain ATCC BAA-471 / A3(2) / M145).